We begin with the raw amino-acid sequence, 612 residues long: U-box domain-containing protein 11 (612 aa).

A coiled-coil region spans residues 127 to 196 (DEVGEQVELA…LHFGEEEEKQ (70 aa)). A U-box domain is found at 240–314 (TIPVDFLCPV…SRWCAEHNIE (75 aa)). 5 ARM repeats span residues 363–402 (TDNR…NLSI), 404–443 (ENNK…SLSL), 445–484 (DENK…NLCI), 486–526 (HGNK…VLAN), and 528–567 (QDAK…SLCK).

It catalyses the reaction S-ubiquitinyl-[E2 ubiquitin-conjugating enzyme]-L-cysteine + [acceptor protein]-L-lysine = [E2 ubiquitin-conjugating enzyme]-L-cysteine + N(6)-ubiquitinyl-[acceptor protein]-L-lysine.. It participates in protein modification; protein ubiquitination. Functionally, functions as an E3 ubiquitin ligase. The chain is U-box domain-containing protein 11 (PUB11) from Arabidopsis thaliana (Mouse-ear cress).